The primary structure comprises 512 residues: Glycerol kinase, glycosomal (512 aa).

Thr-11 contributes to the substrate binding site. An ATP-binding site is contributed by Arg-15. Substrate-binding residues include Arg-84, Tyr-139, and Asp-254. Residues Thr-276, Gly-321, and 422-426 (GLSKN) contribute to the ATP site. The Microbody targeting signal signature appears at 510–512 (AKL).

It belongs to the FGGY kinase family.

The protein resides in the glycosome. The enzyme catalyses glycerol + ATP = sn-glycerol 3-phosphate + ADP + H(+). It participates in polyol metabolism; glycerol degradation via glycerol kinase pathway; sn-glycerol 3-phosphate from glycerol: step 1/1. Its function is as follows. Catalyzes the phosphorylation of glycerol using ATP. Under anoxic conditions, when glycerol 3-phosphate accumulates in the glycosome, it catalyzes the reverse reaction, maintaining the ATP balance. Key enzyme for the survival of bloodstream forms under anoxic conditions. This chain is Glycerol kinase, glycosomal (GK), found in Trypanosoma brucei brucei.